Consider the following 398-residue polypeptide: Probable transcription factor PosF21 (398 aa).

Disordered stretches follow at residues methionine 1–serine 46 and alanine 112–glycine 150. The span at proline 7–proline 19 shows a compositional bias: pro residues. Over residues alanine 125–serine 148 the composition is skewed to polar residues. The bZIP domain occupies aspartate 201–leucine 264. The basic motif stretch occupies residues lysine 203–arginine 224. The interval leucine 229–leucine 264 is leucine-zipper.

Belongs to the bZIP family.

It localises to the nucleus. Its function is as follows. Putative transcription factor with an activatory role. The protein is Probable transcription factor PosF21 (POSF21) of Arabidopsis thaliana (Mouse-ear cress).